Here is a 444-residue protein sequence, read N- to C-terminus: NADH-quinone oxidoreductase subunit F (444 aa).

Position 62–71 (62–71 (GRGGAGFLTG)) interacts with NAD(+). 177 to 224 (GAGRYICGEETALINSLEGRRANPRFKPPFPAYVGLWGKPTCVNNVET) provides a ligand contact to FMN. Cys-354, Cys-357, Cys-360, and Cys-401 together coordinate [4Fe-4S] cluster.

The protein belongs to the complex I 51 kDa subunit family. As to quaternary structure, composed of 13 different subunits. Subunits NuoCD, E, F, and G constitute the peripheral sector of the complex. [4Fe-4S] cluster is required as a cofactor. It depends on FMN as a cofactor.

It carries out the reaction a quinone + NADH + 5 H(+)(in) = a quinol + NAD(+) + 4 H(+)(out). NDH-1 shuttles electrons from NADH, via FMN and iron-sulfur (Fe-S) centers, to quinones in the respiratory chain. Couples the redox reaction to proton translocation (for every two electrons transferred, four hydrogen ions are translocated across the cytoplasmic membrane), and thus conserves the redox energy in a proton gradient. This chain is NADH-quinone oxidoreductase subunit F (nuoF), found in Buchnera aphidicola subsp. Baizongia pistaciae (strain Bp).